A 102-amino-acid polypeptide reads, in one-letter code: uncharacterized protein (102 aa).

The next 2 membrane-spanning stretches (helical) occupy residues 28 to 48 (YLNL…LISI) and 81 to 101 (LSVL…AGIG).

The protein resides in the membrane. This is an uncharacterized protein from Saccharomyces cerevisiae (strain ATCC 204508 / S288c) (Baker's yeast).